The chain runs to 153 residues: 3-hydroxyacyl-[acyl-carrier-protein] dehydratase FabZ (153 aa).

His54 is a catalytic residue.

This sequence belongs to the thioester dehydratase family. FabZ subfamily.

It is found in the cytoplasm. It carries out the reaction a (3R)-hydroxyacyl-[ACP] = a (2E)-enoyl-[ACP] + H2O. In terms of biological role, involved in unsaturated fatty acids biosynthesis. Catalyzes the dehydration of short chain beta-hydroxyacyl-ACPs and long chain saturated and unsaturated beta-hydroxyacyl-ACPs. The chain is 3-hydroxyacyl-[acyl-carrier-protein] dehydratase FabZ from Chlamydia muridarum (strain MoPn / Nigg).